The chain runs to 307 residues: Actin maturation protease (307 aa).

A disordered region spans residues 1–34; that stretch reads MSLENDAAAPPPPPLPPPPPPQPPSLARSESSKK. Positions 9–24 are enriched in pro residues; it reads APPPPPLPPPPPPQPP. The segment at 80–200 is peptidase C39-like; the sequence is SLIQDGPQCG…WAVASGILLG (121 aa). Residue Cys88 is part of the active site.

It belongs to the ACTMAP family.

It is found in the cytoplasm. The enzyme catalyses N-terminal N(alpha)-acetyl-L-methionyl-L-aspartyl-[protein] + H2O = N-terminal L-aspartyl-[protein] + N-acetyl-L-methionine. The catalysed reaction is N-terminal N(alpha)-acetyl-L-methionyl-L-glutamyl-[protein] + H2O = N-terminal L-glutamyl-[protein] + N-acetyl-L-methionine. It carries out the reaction N-terminal N(alpha)-acetyl-L-cysteinyl-L-aspartyl-[protein] + H2O = N-terminal L-aspartyl-[protein] + N-acetyl-L-cysteine. It catalyses the reaction N-terminal N(alpha)-acetyl-L-cysteinyl-L-glutamyl-[protein] + H2O = N-terminal L-glutamyl-[protein] + N-acetyl-L-cysteine. Actin maturation protease that specifically mediates the cleavage of immature acetylated N-terminal actin, thereby contributing to actin maturation. Cleaves N-terminal acetylated methionine of immature cytoplasmic actin after translation. Cleaves N-terminal acetylated cysteine of muscle actin after canonical removal of N-terminal methionine. The sequence is that of Actin maturation protease from Danio rerio (Zebrafish).